Reading from the N-terminus, the 868-residue chain is Translation initiation factor IF-2 (868 aa).

A compositionally biased stretch (basic and acidic residues) spans 199–209 (SKKEEVKPEKV). The interval 199–269 (SKKEEVKPEK…GTEKSDKYRE (71 aa)) is disordered. The span at 249 to 260 (RGGRSKFKKKKG) shows a compositional bias: basic residues. The tr-type G domain maps to 368–537 (GRAPVVTIMG…LLQSEVLELK (170 aa)). The G1 stretch occupies residues 377-384 (GHVDHGKT). 377–384 (GHVDHGKT) is a binding site for GTP. Positions 402 to 406 (GITQH) are G2. The tract at residues 423-426 (DTPG) is G3. GTP contacts are provided by residues 423–427 (DTPGH) and 477–480 (NKMD). The interval 477 to 480 (NKMD) is G4. The tract at residues 513–515 (SAK) is G5.

This sequence belongs to the TRAFAC class translation factor GTPase superfamily. Classic translation factor GTPase family. IF-2 subfamily.

The protein resides in the cytoplasm. Functionally, one of the essential components for the initiation of protein synthesis. Protects formylmethionyl-tRNA from spontaneous hydrolysis and promotes its binding to the 30S ribosomal subunits. Also involved in the hydrolysis of GTP during the formation of the 70S ribosomal complex. This Legionella pneumophila (strain Paris) protein is Translation initiation factor IF-2.